The sequence spans 433 residues: Trigger factor (433 aa).

One can recognise a PPIase FKBP-type domain in the interval G163 to P248.

Belongs to the FKBP-type PPIase family. Tig subfamily.

It is found in the cytoplasm. The catalysed reaction is [protein]-peptidylproline (omega=180) = [protein]-peptidylproline (omega=0). Involved in protein export. Acts as a chaperone by maintaining the newly synthesized protein in an open conformation. Functions as a peptidyl-prolyl cis-trans isomerase. The chain is Trigger factor from Geobacter metallireducens (strain ATCC 53774 / DSM 7210 / GS-15).